Here is a 190-residue protein sequence, read N- to C-terminus: Segregation and condensation protein B (190 aa).

The protein belongs to the ScpB family. Homodimer. Homodimerization may be required to stabilize the binding of ScpA to the Smc head domains. Component of a cohesin-like complex composed of ScpA, ScpB and the Smc homodimer, in which ScpA and ScpB bind to the head domain of Smc. The presence of the three proteins is required for the association of the complex with DNA.

It is found in the cytoplasm. Functionally, participates in chromosomal partition during cell division. May act via the formation of a condensin-like complex containing Smc and ScpA that pull DNA away from mid-cell into both cell halves. The polypeptide is Segregation and condensation protein B (Bacillus cereus (strain ATCC 10987 / NRS 248)).